Reading from the N-terminus, the 284-residue chain is Short chain dehydrogenase/reductase AacuD (284 aa).

Val37 contacts NADP(+). Residues Ser166 and Tyr180 each act as proton donor in the active site. Residues Tyr180, Lys184, and Thr215 each contribute to the NADP(+) site. Lys184 functions as the Lowers pKa of active site Tyr in the catalytic mechanism.

It belongs to the short-chain dehydrogenases/reductases (SDR) family.

The protein operates within secondary metabolite biosynthesis. Its function is as follows. Short chain dehydrogenase/reductase; part of the gene cluster that mediates the biosynthesis of the tetrahydroxanthone dimer secalonic acid D. The pathway begins with the synthesis of atrochrysone thioester by the polyketide synthase AacuL. The atrochrysone carboxyl ACP thioesterase AacuM then breaks the thioester bond and releases the atrochrysone carboxylic acid from AacuL. Atrochrysone carboxylic acid is decarboxylated by the decarboxylase AacuI, and oxidized by the anthrone oxygenase AacuG to yield emodin. Emodin is then reduced to emodin hydroquinone by a yet unidentified oxidoreductase. A-ring reduction by the short chain dehydrogenase AacuN, dehydration by the scytalone dehydratase-like protein AacuK and probable spontaneous re-oxidation, results in overall deoxygenation to chrysophanol. Baeyer-Villiger oxidation by the Baeyer-Villiger monooxygenase (BVMO) AacuH then yields monodictyphenone. Monodictyphenone is transformed into compounds with the tetrahydroxanthone skeleton via methylesterification by the methyltransferase AacuQ, followed by the action of the flavin-dependent monooxygenase AacuC, the isomerase AacuP, and the short chain dehydrogenase/reductase AacuF or AacuD. AacuF and AacuD should accept the same compound as a substrate but perform the ketoreduction with a different stereoselectivity, thus yielding blennolides B and A, respectively. In the final step of the biosynthesis, the cytochrome P450 monooxygenase AacuE accepts blennolide B and/or blennolide A to conduct the dimerization reaction to furnish the tetrahydroxanthone dimers, secalonic acids D, B, and F. The chain is Short chain dehydrogenase/reductase AacuD from Aspergillus aculeatus (strain ATCC 16872 / CBS 172.66 / WB 5094).